Consider the following 127-residue polypeptide: MPRATNGPASRKRRKRILLRAKGFRGFRSKLFRYAKDAVYKAWQYEYRDRKRRKGQFRRLWIARISAAVRDRGLTYSRFMEGLKAANIDLDRKVLADLAVSDEKAFDVIFAQAKKAIEAKDGAALRA.

Belongs to the bacterial ribosomal protein bL20 family.

Its function is as follows. Binds directly to 23S ribosomal RNA and is necessary for the in vitro assembly process of the 50S ribosomal subunit. It is not involved in the protein synthesizing functions of that subunit. The polypeptide is Large ribosomal subunit protein bL20 (Akkermansia muciniphila (strain ATCC BAA-835 / DSM 22959 / JCM 33894 / BCRC 81048 / CCUG 64013 / CIP 107961 / Muc)).